Consider the following 372-residue polypeptide: 4-hydroxy-3-methylbut-2-en-1-yl diphosphate synthase (flavodoxin) (372 aa).

Cys-270, Cys-273, Cys-305, and Glu-312 together coordinate [4Fe-4S] cluster.

The protein belongs to the IspG family. Requires [4Fe-4S] cluster as cofactor.

It carries out the reaction (2E)-4-hydroxy-3-methylbut-2-enyl diphosphate + oxidized [flavodoxin] + H2O + 2 H(+) = 2-C-methyl-D-erythritol 2,4-cyclic diphosphate + reduced [flavodoxin]. Its pathway is isoprenoid biosynthesis; isopentenyl diphosphate biosynthesis via DXP pathway; isopentenyl diphosphate from 1-deoxy-D-xylulose 5-phosphate: step 5/6. In terms of biological role, converts 2C-methyl-D-erythritol 2,4-cyclodiphosphate (ME-2,4cPP) into 1-hydroxy-2-methyl-2-(E)-butenyl 4-diphosphate. In Escherichia coli O8 (strain IAI1), this protein is 4-hydroxy-3-methylbut-2-en-1-yl diphosphate synthase (flavodoxin).